We begin with the raw amino-acid sequence, 103 residues long: RNA-binding protein Hfq (103 aa).

Positions 9 to 68 (DPFLNALRRERVPVSIYLVNGIKLQGQIESFDQFVILLKNTVSQMVYKHAISTVVPSRPV) constitute a Sm domain. Residues 63 to 103 (VPSRPVSHHSNNAGGGTGSNFHHGSNAQGSSAPAQDSDETE) form a disordered region. The segment covering 81 to 96 (SNFHHGSNAQGSSAPA) has biased composition (polar residues).

The protein belongs to the Hfq family. In terms of assembly, homohexamer.

Functionally, RNA chaperone that binds small regulatory RNA (sRNAs) and mRNAs to facilitate mRNA translational regulation in response to envelope stress, environmental stress and changes in metabolite concentrations. Also binds with high specificity to tRNAs. This chain is RNA-binding protein Hfq, found in Enterobacter sp. (strain 638).